Consider the following 441-residue polypeptide: tRNA-2-methylthio-N(6)-dimethylallyladenosine synthase (441 aa).

Positions 5-120 (KLLYIETFGC…LPEMVRAAEQ (116 aa)) constitute an MTTase N-terminal domain. [4Fe-4S] cluster is bound by residues Cys14, Cys50, Cys83, Cys158, Cys162, and Cys165. One can recognise a Radical SAM core domain in the interval 144–374 (EGGGVTRFVT…QGLQRDMTIE (231 aa)). A TRAM domain is found at 377-439 (AGFVGTCQAV…PNSLLGELAV (63 aa)).

It belongs to the methylthiotransferase family. MiaB subfamily. As to quaternary structure, monomer. It depends on [4Fe-4S] cluster as a cofactor.

The protein localises to the cytoplasm. The catalysed reaction is N(6)-dimethylallyladenosine(37) in tRNA + (sulfur carrier)-SH + AH2 + 2 S-adenosyl-L-methionine = 2-methylsulfanyl-N(6)-dimethylallyladenosine(37) in tRNA + (sulfur carrier)-H + 5'-deoxyadenosine + L-methionine + A + S-adenosyl-L-homocysteine + 2 H(+). In terms of biological role, catalyzes the methylthiolation of N6-(dimethylallyl)adenosine (i(6)A), leading to the formation of 2-methylthio-N6-(dimethylallyl)adenosine (ms(2)i(6)A) at position 37 in tRNAs that read codons beginning with uridine. This chain is tRNA-2-methylthio-N(6)-dimethylallyladenosine synthase, found in Geobacter metallireducens (strain ATCC 53774 / DSM 7210 / GS-15).